The sequence spans 269 residues: Indole-3-glycerol phosphate synthase (269 aa).

The protein belongs to the TrpC family.

The catalysed reaction is 1-(2-carboxyphenylamino)-1-deoxy-D-ribulose 5-phosphate + H(+) = (1S,2R)-1-C-(indol-3-yl)glycerol 3-phosphate + CO2 + H2O. It participates in amino-acid biosynthesis; L-tryptophan biosynthesis; L-tryptophan from chorismate: step 4/5. The polypeptide is Indole-3-glycerol phosphate synthase (Streptomyces griseus subsp. griseus (strain JCM 4626 / CBS 651.72 / NBRC 13350 / KCC S-0626 / ISP 5235)).